The primary structure comprises 376 residues: Histidinol-phosphate aminotransferase 1 (376 aa).

Lysine 235 is modified (N6-(pyridoxal phosphate)lysine).

This sequence belongs to the class-II pyridoxal-phosphate-dependent aminotransferase family. Histidinol-phosphate aminotransferase subfamily. As to quaternary structure, homodimer. Pyridoxal 5'-phosphate serves as cofactor.

It catalyses the reaction L-histidinol phosphate + 2-oxoglutarate = 3-(imidazol-4-yl)-2-oxopropyl phosphate + L-glutamate. The protein operates within amino-acid biosynthesis; L-histidine biosynthesis; L-histidine from 5-phospho-alpha-D-ribose 1-diphosphate: step 7/9. In Cupriavidus pinatubonensis (strain JMP 134 / LMG 1197) (Cupriavidus necator (strain JMP 134)), this protein is Histidinol-phosphate aminotransferase 1.